The chain runs to 587 residues: Synaptotagmin-3 (587 aa).

Residues 1–54 lie on the Vesicular side of the membrane; that stretch reads MSGDYEDDLCRRALILVSDLCARVRDADTNDRCQEFNELRIRGYPRGPDADISV. The cysteine motif stretch occupies residues 10–34; the sequence is CRRALILVSDLCARVRDADTNDRCQ. A helical transmembrane segment spans residues 55–75; the sequence is SLLSVIVTFCGIVLLGVSLFV. The Cytoplasmic portion of the chain corresponds to 76 to 587; sequence SWKLCWVPWR…KGLSEKENSE (512 aa). Low complexity predominate over residues 183–205; it reads PSQTSPELPSEGGTGSGLLLLPP. Residues 183-258 are disordered; sequence PSQTSPELPS…EERPPALPLP (76 aa). Over residues 213–224 the composition is skewed to polar residues; that stretch reads AQSHQQVTSLAP. The segment covering 229–244 has biased composition (low complexity); the sequence is PALPRPLTQQTLTTQA. An Omega-N-methylarginine modification is found at Arg-286. C2 domains lie at 296–417 and 428–562; these read PCGR…PLWR and DLGE…EHWH. Asp-327, Asp-333, Asp-385, Phe-386, Asp-387, Ser-390, Asp-393, Asp-459, Asp-465, Asp-519, and Asp-521 together coordinate Ca(2+).

The protein belongs to the synaptotagmin family. As to quaternary structure, homodimer; disulfide-linked via the cysteine motif. Can also form heterodimers with SYT6, SYT9 and SYT10. Ca(2+) serves as cofactor.

It localises to the cell membrane. The protein resides in the cytoplasmic vesicle. Its subcellular location is the secretory vesicle membrane. In terms of biological role, ca(2+) sensor involved in Ca(2+)-dependent exocytosis of secretory vesicles through Ca(2+) and phospholipid binding to the C2 domain. Ca(2+) induces binding of the C2-domains to phospholipid membranes and to assembled SNARE-complexes; both actions contribute to triggering exocytosis. Plays a role in dendrite formation by melanocytes. In Mus musculus (Mouse), this protein is Synaptotagmin-3 (Syt3).